Reading from the N-terminus, the 174-residue chain is Crossover junction endodeoxyribonuclease RuvC (174 aa).

Residues Asp-8, Glu-67, and Asp-139 contribute to the active site. Mg(2+) is bound by residues Asp-8, Glu-67, and Asp-139.

This sequence belongs to the RuvC family. As to quaternary structure, homodimer which binds Holliday junction (HJ) DNA. The HJ becomes 2-fold symmetrical on binding to RuvC with unstacked arms; it has a different conformation from HJ DNA in complex with RuvA. In the full resolvosome a probable DNA-RuvA(4)-RuvB(12)-RuvC(2) complex forms which resolves the HJ. Mg(2+) serves as cofactor.

Its subcellular location is the cytoplasm. The catalysed reaction is Endonucleolytic cleavage at a junction such as a reciprocal single-stranded crossover between two homologous DNA duplexes (Holliday junction).. In terms of biological role, the RuvA-RuvB-RuvC complex processes Holliday junction (HJ) DNA during genetic recombination and DNA repair. Endonuclease that resolves HJ intermediates. Cleaves cruciform DNA by making single-stranded nicks across the HJ at symmetrical positions within the homologous arms, yielding a 5'-phosphate and a 3'-hydroxyl group; requires a central core of homology in the junction. The consensus cleavage sequence is 5'-(A/T)TT(C/G)-3'. Cleavage occurs on the 3'-side of the TT dinucleotide at the point of strand exchange. HJ branch migration catalyzed by RuvA-RuvB allows RuvC to scan DNA until it finds its consensus sequence, where it cleaves and resolves the cruciform DNA. The sequence is that of Crossover junction endodeoxyribonuclease RuvC from Stutzerimonas stutzeri (strain A1501) (Pseudomonas stutzeri).